Reading from the N-terminus, the 706-residue chain is Melanopsin (706 aa).

Over 1–86 the chain is Extracellular; sequence MTEIPSFQPP…VWDIPPLAHY (86 aa). N-linked (GlcNAc...) asparagine glycosylation is found at Asn12, Asn64, and Asn69. Residues 87-107 traverse the membrane as a helical segment; sequence IVGTAVFCIGCCGMFGNAVVV. Over 108–121 the chain is Cytoplasmic; it reads YSFIKSKGLRTPAN. A helical membrane pass occupies residues 122–142; that stretch reads FFIINLALSDFLMNLTNMPIF. Residues 143 to 159 are Extracellular-facing; the sequence is AVNSAFQRWLLSDFACE. Cys158 and Cys236 are disulfide-bonded. A helical membrane pass occupies residues 160–180; it reads LYGFAGGLFGCLSINTLMAIS. The Cytoplasmic segment spans residues 181–201; the sequence is MDRYLVITKPFLVMRIVTKQR. A helical transmembrane segment spans residues 202–222; the sequence is VMFAILLLWIWSLVWALPPLF. At 223–248 the chain is on the extracellular side; the sequence is GWSAYVSEGFGTSCTFDYMTPKLSYH. Residues 249 to 269 form a helical membrane-spanning segment; it reads IFTYIIFFTMYFIPGGVMIYC. Residues 270–314 are Cytoplasmic-facing; sequence YYNIFATVKSGDKQFGKAVKEMAHEDVKNKAQQERQRKNEIKTAK. The chain crosses the membrane as a helical span at residues 315-335; it reads IAFIVISLFMSAWTPYAVVSA. At 336–351 the chain is on the extracellular side; the sequence is LGTLGYQDLVTPYLQS. A helical transmembrane segment spans residues 352-372; the sequence is IPAMFAKSSAVYSPIVYAITY. N6-(retinylidene)lysine is present on Lys358. Residues 373 to 706 are Cytoplasmic-facing; it reads PKFREAVKKH…LSEAHDETVL (334 aa). 3 disordered regions span residues 393–446, 571–599, and 630–658; these read SEEE…RQDT, RTESGYDRSQDSQRKKVVGDTHRSRSFNT, and QSSEKHEYDNPAFDEGITEVDTDSENETE. 2 stretches are compositionally biased toward low complexity: residues 404-418 and 426-442; these read QSSASASMSMTQTTA and SVDSGSSVSVDDSSGVS. Residues 571 to 593 are compositionally biased toward basic and acidic residues; the sequence is RTESGYDRSQDSQRKKVVGDTHR. Acidic residues predominate over residues 645–658; sequence GITEVDTDSENETE.

Belongs to the G-protein coupled receptor 1 family. Opsin subfamily. Expressed in Joseph cells and photoreceptor cells of the dorsal ocelli.

It localises to the cell membrane. Photoreceptor implicated in non-image-forming responses to light. Photoisomerizes covalently bound all-trans retinal back to 11-cis retinal. Most likely coupled to the G(q) signaling cascade. The sequence is that of Melanopsin from Branchiostoma belcheri (Amphioxus).